Here is an 83-residue protein sequence, read N- to C-terminus: MPGDMQETMMFKVEKEEKVRVRDVLTEVQAALTEKGYDPINQLIGYLLSGDPAYITSHKGARNLIRRVERDEILAELLKSYLA.

Belongs to the UPF0297 family.

This chain is UPF0297 protein Moth_1643, found in Moorella thermoacetica (strain ATCC 39073 / JCM 9320).